We begin with the raw amino-acid sequence, 527 residues long: Glucose-6-phosphate isomerase (527 aa).

The active-site Proton donor is the Glu323. Residues His352 and Lys454 contribute to the active site.

Belongs to the GPI family.

Its subcellular location is the cytoplasm. The catalysed reaction is alpha-D-glucose 6-phosphate = beta-D-fructose 6-phosphate. It functions in the pathway carbohydrate biosynthesis; gluconeogenesis. Its pathway is carbohydrate degradation; glycolysis; D-glyceraldehyde 3-phosphate and glycerone phosphate from D-glucose: step 2/4. Its function is as follows. Catalyzes the reversible isomerization of glucose-6-phosphate to fructose-6-phosphate. The polypeptide is Glucose-6-phosphate isomerase (Prochlorococcus marinus (strain MIT 9301)).